The chain runs to 543 residues: T-complex protein 1 subunit eta (543 aa).

M1 is modified (N-acetylmethionine). Residue G41 participates in ADP binding. Residue G41 coordinates ATP. K67 carries the N6-acetyllysine modification. Mg(2+) is bound at residue D92. Positions 93, 94, 95, 96, 164, and 165 each coordinate ADP. G93 is an ATP binding site. S96 serves as a coordination point for ATP. Residues K250 and K320 each carry the N6-acetyllysine modification. R398 and G409 together coordinate ATP. G409 serves as a coordination point for ADP. Residue K430 forms a Glycyl lysine isopeptide (Lys-Gly) (interchain with G-Cter in SUMO2) linkage. 2 residues coordinate ADP: E494 and R499. Residue R499 coordinates ATP. A disordered region spans residues 524–543; sequence RSTVDAPTAAGRGRGRGRPH. The residue at position 535 (R535) is an Omega-N-methylarginine.

Belongs to the TCP-1 chaperonin family. As to quaternary structure, component of the chaperonin-containing T-complex (TRiC), a hexadecamer composed of two identical back-to-back stacked rings enclosing a protein folding chamber. Each ring is made up of eight different subunits: TCP1/CCT1, CCT2, CCT3, CCT4, CCT5, CCT6A/CCT6, CCT7, CCT8. Interacts with PACRG. Interacts with DLEC1.

It localises to the cytoplasm. The enzyme catalyses ATP + H2O = ADP + phosphate + H(+). In terms of biological role, component of the chaperonin-containing T-complex (TRiC), a molecular chaperone complex that assists the folding of actin, tubulin and other proteins upon ATP hydrolysis. The TRiC complex mediates the folding of WRAP53/TCAB1, thereby regulating telomere maintenance. The polypeptide is T-complex protein 1 subunit eta (CCT7) (Homo sapiens (Human)).